Reading from the N-terminus, the 467-residue chain is Argininosuccinate lyase (467 aa).

Belongs to the lyase 1 family. Argininosuccinate lyase subfamily.

The protein resides in the cytoplasm. The enzyme catalyses 2-(N(omega)-L-arginino)succinate = fumarate + L-arginine. It functions in the pathway amino-acid biosynthesis; L-arginine biosynthesis; L-arginine from L-ornithine and carbamoyl phosphate: step 3/3. This is Argininosuccinate lyase from Sinorhizobium fredii (strain NBRC 101917 / NGR234).